The primary structure comprises 133 residues: Small ribosomal subunit protein uS9 (133 aa).

A disordered region spans residues 101 to 133 (MKPKGLLTRDPREVERKKYGLKKARRAPQFSKR). A compositionally biased stretch (basic and acidic residues) spans 107–118 (LTRDPREVERKK). Residues 119 to 133 (YGLKKARRAPQFSKR) show a composition bias toward basic residues.

The protein belongs to the universal ribosomal protein uS9 family.

The polypeptide is Small ribosomal subunit protein uS9 (Deinococcus radiodurans (strain ATCC 13939 / DSM 20539 / JCM 16871 / CCUG 27074 / LMG 4051 / NBRC 15346 / NCIMB 9279 / VKM B-1422 / R1)).